Reading from the N-terminus, the 1130-residue chain is Putative protein tag-278 (1130 aa).

Disordered stretches follow at residues 1 to 92, 104 to 129, and 974 to 1130; these read MSRS…DIDN, VARE…ELKR, and NELI…AWKF. 2 coiled-coil regions span residues 121–779 and 805–1061; these read AGRE…EEIK and EERE…ARAK. Positions 983-993 are enriched in basic and acidic residues; it reads RQTDESTSEPH. A compositionally biased stretch (polar residues) spans 999–1011; it reads SITSHGVFQNFVS. Basic and acidic residues-rich tracts occupy residues 1013–1057 and 1068–1081; these read MKDK…EKSP and RLRD…KSDN. Residues 1082–1095 show a composition bias toward low complexity; that stretch reads LESTPSSSSRNLLS. Residues 1116-1130 show a composition bias toward basic and acidic residues; sequence TKKDSSSEKRPAWKF.

This is Putative protein tag-278 (tag-278) from Caenorhabditis elegans.